We begin with the raw amino-acid sequence, 188 residues long: ATP synthase subunit b (188 aa).

Residues V19–F39 form a helical membrane-spanning segment.

The protein belongs to the ATPase B chain family. As to quaternary structure, F-type ATPases have 2 components, F(1) - the catalytic core - and F(0) - the membrane proton channel. F(1) has five subunits: alpha(3), beta(3), gamma(1), delta(1), epsilon(1). F(0) has three main subunits: a(1), b(2) and c(10-14). The alpha and beta chains form an alternating ring which encloses part of the gamma chain. F(1) is attached to F(0) by a central stalk formed by the gamma and epsilon chains, while a peripheral stalk is formed by the delta and b chains.

It is found in the cell membrane. Its function is as follows. F(1)F(0) ATP synthase produces ATP from ADP in the presence of a proton or sodium gradient. F-type ATPases consist of two structural domains, F(1) containing the extramembraneous catalytic core and F(0) containing the membrane proton channel, linked together by a central stalk and a peripheral stalk. During catalysis, ATP synthesis in the catalytic domain of F(1) is coupled via a rotary mechanism of the central stalk subunits to proton translocation. Component of the F(0) channel, it forms part of the peripheral stalk, linking F(1) to F(0). The protein is ATP synthase subunit b of Mesomycoplasma hyopneumoniae (strain J / ATCC 25934 / NCTC 10110) (Mycoplasma hyopneumoniae).